A 107-amino-acid polypeptide reads, in one-letter code: Putative ankyrin repeat protein RP714 (107 aa).

ANK repeat units lie at residues 7–36 (PPLS…DIDV), 40–69 (NGNS…TIDA), and 73–102 (ELAT…NKSA).

This Rickettsia prowazekii (strain Madrid E) protein is Putative ankyrin repeat protein RP714.